Here is a 129-residue protein sequence, read N- to C-terminus: Small ribosomal subunit protein uS11 (129 aa).

It belongs to the universal ribosomal protein uS11 family. In terms of assembly, part of the 30S ribosomal subunit. Interacts with proteins S7 and S18. Binds to IF-3.

In terms of biological role, located on the platform of the 30S subunit, it bridges several disparate RNA helices of the 16S rRNA. Forms part of the Shine-Dalgarno cleft in the 70S ribosome. This is Small ribosomal subunit protein uS11 from Tolumonas auensis (strain DSM 9187 / NBRC 110442 / TA 4).